Reading from the N-terminus, the 375-residue chain is L-asparaginase 2 (375 aa).

The signal sequence occupies residues methionine 1–glycine 19. The segment at histidine 22 to glutamate 46 is disordered. A compositionally biased stretch (basic and acidic residues) spans proline 24 to glutamine 35. The Asparaginase/glutaminase domain maps to proline 51–tyrosine 375. Threonine 61 functions as the O-isoaspartyl threonine intermediate in the catalytic mechanism. Substrate-binding positions include serine 108 and threonine 141–aspartate 142.

It belongs to the asparaginase 1 family. In terms of assembly, homotetramer.

The catalysed reaction is L-asparagine + H2O = L-aspartate + NH4(+). Catalyzes the conversion of L-asparagine to L-aspartate and ammonium. The protein is L-asparaginase 2 (ansZ) of Bacillus subtilis (strain 168).